Here is a 160-residue protein sequence, read N- to C-terminus: Major strawberry allergen Fra a 1.07 (160 aa).

It belongs to the BetVI family. Post-translationally, phosphorylated in vivo. Phosphorylation prevents its activity as ribonuclease. Highly expressed in roots. Expressed a low levels in ripe red fruits.

Possesses ribonuclease activity in vitro. This is Major strawberry allergen Fra a 1.07 from Fragaria ananassa (Strawberry).